A 175-amino-acid polypeptide reads, in one-letter code: Sec-independent protein translocase protein TatB (175 aa).

The helical transmembrane segment at 1–21 (MLDLGLSKMALIGVVALVVLG) threads the bilayer. Positions 155 to 175 (SGAARVARHQPASLRRPTRFF) are disordered.

Belongs to the TatB family. In terms of assembly, the Tat system comprises two distinct complexes: a TatABC complex, containing multiple copies of TatA, TatB and TatC subunits, and a separate TatA complex, containing only TatA subunits. Substrates initially bind to the TatABC complex, which probably triggers association of the separate TatA complex to form the active translocon.

The protein resides in the cell inner membrane. Functionally, part of the twin-arginine translocation (Tat) system that transports large folded proteins containing a characteristic twin-arginine motif in their signal peptide across membranes. Together with TatC, TatB is part of a receptor directly interacting with Tat signal peptides. TatB may form an oligomeric binding site that transiently accommodates folded Tat precursor proteins before their translocation. The sequence is that of Sec-independent protein translocase protein TatB from Burkholderia lata (strain ATCC 17760 / DSM 23089 / LMG 22485 / NCIMB 9086 / R18194 / 383).